Consider the following 453-residue polypeptide: Carbamoyl phosphate synthase arginine-specific small chain (453 aa).

A mitochondrion-targeting transit peptide spans 1–13 (MFSKLAANFAQRA). In terms of domain architecture, Glutamine amidotransferase type-1 spans 233 to 420 (HVALIDCGVK…LENVRAAKSA (188 aa)). Catalysis depends on Cys309, which acts as the Nucleophile. Active-site residues include His393 and Glu395.

It belongs to the CarA family. As to quaternary structure, heterodimer composed of 2 chains; the small (or glutamine) chain promotes the hydrolysis of glutamine to ammonia, which is used by the large (or ammonia) chain to synthesize carbamoyl phosphate.

The protein resides in the mitochondrion matrix. The catalysed reaction is hydrogencarbonate + L-glutamine + 2 ATP + H2O = carbamoyl phosphate + L-glutamate + 2 ADP + phosphate + 2 H(+). It carries out the reaction L-glutamine + H2O = L-glutamate + NH4(+). It participates in amino-acid biosynthesis; L-arginine biosynthesis; carbamoyl phosphate from bicarbonate: step 1/1. Its function is as follows. Small subunit of the arginine-specific carbamoyl phosphate synthase (CPSase). CPSase catalyzes the formation of carbamoyl phosphate from the ammonia moiety of glutamine, carbonate, and phosphate donated by ATP, the first step of the arginine biosynthetic pathway. The small subunit (glutamine amidotransferase) binds and cleaves glutamine to supply the large subunit with the substrate ammonia. This Hypocrea virens (Gliocladium virens) protein is Carbamoyl phosphate synthase arginine-specific small chain (cpa1).